Here is a 211-residue protein sequence, read N- to C-terminus: Thymidylate kinase (211 aa).

7-14 contacts ATP; that stretch reads GIDASGKS.

Belongs to the thymidylate kinase family.

It carries out the reaction dTMP + ATP = dTDP + ADP. Phosphorylation of dTMP to form dTDP in both de novo and salvage pathways of dTTP synthesis. In Mesomycoplasma hyopneumoniae (strain 7448) (Mycoplasma hyopneumoniae), this protein is Thymidylate kinase.